A 272-amino-acid polypeptide reads, in one-letter code: Exosome complex component Rrp42 (272 aa).

Belongs to the RNase PH family. Rrp42 subfamily. Component of the archaeal exosome complex. Forms a hexameric ring-like arrangement composed of 3 Rrp41-Rrp42 heterodimers. The hexameric ring associates with a trimer of Rrp4 and/or Csl4 subunits.

The protein resides in the cytoplasm. Functionally, non-catalytic component of the exosome, which is a complex involved in RNA degradation. Contributes to the structuring of the Rrp41 active site. This Thermococcus onnurineus (strain NA1) protein is Exosome complex component Rrp42.